The sequence spans 273 residues: Type II methyltransferase M2.MboI (273 aa).

This sequence belongs to the N(4)/N(6)-methyltransferase family.

The enzyme catalyses a 2'-deoxyadenosine in DNA + S-adenosyl-L-methionine = an N(6)-methyl-2'-deoxyadenosine in DNA + S-adenosyl-L-homocysteine + H(+). Functionally, a beta subtype methylase that recognizes the double-stranded sequence 5'-GATC-3', methylates A-2 on both strands, and protects the DNA from cleavage by the MboI endonuclease. This seems to be a weaker methylase than M1.MboI. This is Type II methyltransferase M2.MboI (mboIBM) from Moraxella bovis.